We begin with the raw amino-acid sequence, 243 residues long: Fibroblast growth factor 12 (243 aa).

Disordered regions lie at residues 1 to 39 and 216 to 243; these read MAAA…DGRS and IGEK…QDST. Positions 11–38 match the Bipartite nuclear localization signal motif; it reads RQKRQARESNSDRVSASKRRSSPSKDGR.

The protein belongs to the heparin-binding growth factors family. As to quaternary structure, interacts with the C-terminal region of SCN9A. Brain, eye and testis; highly expressed in embryonic retina, olfactory epithelium, olfactory bulb, and in a segmental pattern of the body wall; in adult olfactory bulb, less in cerebellum, deep cerebellar nuclei, cortex and multiple midbrain structures.

The protein resides in the nucleus. Functionally, involved in nervous system development and function. Involved in the positive regulation of voltage-gated sodium channel activity. Promotes neuronal excitability by elevating the voltage dependence of neuronal sodium channel SCN8A fast inactivation. This chain is Fibroblast growth factor 12 (FGF12), found in Homo sapiens (Human).